The following is a 408-amino-acid chain: Dicamba O-demethylase 1, ferredoxin reductase component (408 aa).

FAD-binding residues include Gly14, Lys49, Val82, Arg130, Asp279, and Val298.

It belongs to the FAD-dependent oxidoreductase family. Monomer. The dicamba O-demethylase multicomponent enzyme system is composed of an oxygenase component (DdmC) and an electron transfer component formed by a ferredoxin reductase (DdmA1) and a ferredoxin (DdmB). In vitro, dicamba O-demethylase assays in which DdmA2 is substituted for DdmA1 demonstrate that the two enzymes possess nearly identical activities. FAD serves as cofactor.

The enzyme catalyses 2 reduced [2Fe-2S]-[ferredoxin] + NAD(+) + H(+) = 2 oxidized [2Fe-2S]-[ferredoxin] + NADH. Its function is as follows. Component of the dicamba O-demethylase multicomponent enzyme system involved in the degradation of the herbicide dicamba. In vitro, catalyzes the transfers of electrons from ferredoxin (DdmB) to NADH. Both NADH and NADPH support enzyme activity, with NADH being markedly more effective than NADPH. The polypeptide is Dicamba O-demethylase 1, ferredoxin reductase component (Stenotrophomonas maltophilia (Pseudomonas maltophilia)).